A 115-amino-acid polypeptide reads, in one-letter code: NADH-ubiquinone oxidoreductase chain 3 (115 aa).

3 helical membrane-spanning segments follow: residues 3–23 (LMLA…IMFW), 55–75 (FFLV…LLSL), and 84–104 (LPTM…SLAY).

It belongs to the complex I subunit 3 family. Core subunit of respiratory chain NADH dehydrogenase (Complex I) which is composed of 45 different subunits. Interacts with TMEM186. Interacts with TMEM242.

The protein resides in the mitochondrion inner membrane. It catalyses the reaction a ubiquinone + NADH + 5 H(+)(in) = a ubiquinol + NAD(+) + 4 H(+)(out). In terms of biological role, core subunit of the mitochondrial membrane respiratory chain NADH dehydrogenase (Complex I) which catalyzes electron transfer from NADH through the respiratory chain, using ubiquinone as an electron acceptor. Essential for the catalytic activity of complex I. The sequence is that of NADH-ubiquinone oxidoreductase chain 3 from Papio hamadryas (Hamadryas baboon).